The chain runs to 273 residues: Homeobox protein HMX2 (273 aa).

Residues 1 to 154 form a disordered region; the sequence is MGSKEDVGKG…TGAAKKKTRT (154 aa). Residues 114–123 show a composition bias toward basic and acidic residues; the sequence is PDFKEEKERL. Residues 149–208 constitute a DNA-binding region (homeobox); sequence KKKTRTVFSRSQVYQLESTFDMKRYLSSSERACLASSLQLTETQVKTWFQNRRNKWKRQL.

This sequence belongs to the HMX homeobox family. As to expression, expressed in the developing CNS, including a specific expression in vestibular structures throughout inner ear development.

The protein resides in the nucleus. In terms of biological role, transcription factor involved in specification of neuronal cell types and which is required for inner ear and hypothalamus development. In Mus musculus (Mouse), this protein is Homeobox protein HMX2 (Hmx2).